A 181-amino-acid chain; its full sequence is MKQLLDFLPLVIFFAVYKFFDIYIASGALIAATALQLIISYMLYKKLEKMHLITFAMVSVFGSLTLILHDDSFIKWKVTIVYALFAIALAVSQFMNKPILKSMLGKELVVEDKIWAHVTWYWVLFFVVCGLVNIYVAFSLSQETWVNFKVFGLTALTLINTVLTVFYLFKNMSEEDKKELK.

The next 5 membrane-spanning stretches (helical) occupy residues 10–30, 50–70, 80–100, 118–138, and 148–168; these read LVIF…GALI, MHLI…ILHD, IVYA…KPIL, VTWY…YVAF, and FKVF…VFYL.

This sequence belongs to the YciB family.

The protein resides in the cell inner membrane. In terms of biological role, plays a role in cell envelope biogenesis, maintenance of cell envelope integrity and membrane homeostasis. This Shewanella piezotolerans (strain WP3 / JCM 13877) protein is Inner membrane-spanning protein YciB.